Consider the following 303-residue polypeptide: Ribosomal RNA small subunit methyltransferase H (303 aa).

S-adenosyl-L-methionine is bound by residues 33–35 (GGH), Asp-52, Phe-79, Asp-97, and Gln-104.

The protein belongs to the methyltransferase superfamily. RsmH family.

Its subcellular location is the cytoplasm. The enzyme catalyses cytidine(1402) in 16S rRNA + S-adenosyl-L-methionine = N(4)-methylcytidine(1402) in 16S rRNA + S-adenosyl-L-homocysteine + H(+). In terms of biological role, specifically methylates the N4 position of cytidine in position 1402 (C1402) of 16S rRNA. In Wolinella succinogenes (strain ATCC 29543 / DSM 1740 / CCUG 13145 / JCM 31913 / LMG 7466 / NCTC 11488 / FDC 602W) (Vibrio succinogenes), this protein is Ribosomal RNA small subunit methyltransferase H.